Reading from the N-terminus, the 37-residue chain is Large ribosomal subunit protein bL36c (37 aa).

It belongs to the bacterial ribosomal protein bL36 family.

It localises to the plastid. The protein localises to the chloroplast. This chain is Large ribosomal subunit protein bL36c, found in Populus alba (White poplar).